The chain runs to 279 residues: Shikimate dehydrogenase (NADP(+)) (279 aa).

Residues 20-22 (SRS) and threonine 67 each bind shikimate. The active-site Proton acceptor is the lysine 71. Residue aspartate 83 participates in NADP(+) binding. 2 residues coordinate shikimate: asparagine 92 and aspartate 108. Residues 134 to 138 (GAGGA) and leucine 223 each bind NADP(+). Tyrosine 225 contacts shikimate. Glycine 246 lines the NADP(+) pocket.

Belongs to the shikimate dehydrogenase family. Homodimer.

It carries out the reaction shikimate + NADP(+) = 3-dehydroshikimate + NADPH + H(+). It participates in metabolic intermediate biosynthesis; chorismate biosynthesis; chorismate from D-erythrose 4-phosphate and phosphoenolpyruvate: step 4/7. Functionally, involved in the biosynthesis of the chorismate, which leads to the biosynthesis of aromatic amino acids. Catalyzes the reversible NADPH linked reduction of 3-dehydroshikimate (DHSA) to yield shikimate (SA). This Cereibacter sphaeroides (strain ATCC 17023 / DSM 158 / JCM 6121 / CCUG 31486 / LMG 2827 / NBRC 12203 / NCIMB 8253 / ATH 2.4.1.) (Rhodobacter sphaeroides) protein is Shikimate dehydrogenase (NADP(+)).